The chain runs to 289 residues: Inorganic pyrophosphatase (289 aa).

N-acetylserine is present on Ser-2. Residue Lys-57 is modified to N6-acetyllysine. Positions 116, 121, and 153 each coordinate Mg(2+). Phosphoserine is present on Ser-250.

Belongs to the PPase family. Homodimer. Mg(2+) serves as cofactor. In terms of processing, the N-terminus is blocked. Highest levels are found in retinal rod outer segments.

It is found in the cytoplasm. It catalyses the reaction diphosphate + H2O = 2 phosphate + H(+). This chain is Inorganic pyrophosphatase (PPA1), found in Bos taurus (Bovine).